A 190-amino-acid polypeptide reads, in one-letter code: Zinc finger C2H2 protein ECU03_0790 (190 aa).

4 consecutive C2H2-type zinc fingers follow at residues 4–27 (RCCFEGCGKSFPRRAKLSDHLNTH), 33–55 (YKCDMCEKSYMKNGHLSVHKKKH), 85–108 (YKCGICGKRYRKRSWFDVHVESHH), and 119–142 (HVCEYCKFEFNKKSNLSTHVRSVH).

This chain is Zinc finger C2H2 protein ECU03_0790, found in Encephalitozoon cuniculi (strain GB-M1) (Microsporidian parasite).